The following is a 541-amino-acid chain: Protein ST7 homolog (541 aa).

The chain crosses the membrane as a helical span at residues 15–35 (FYVALTGTSSLISGLILIFEW). The tract at residues 62 to 116 (DAQSDSSNGSGSSTSSGSSSSSNGGGGGGGGGAGGGGPGAGGGTNSTTTTGTQMP) is disordered. Positions 67-83 (SSNGSGSSTSSGSSSSS) are enriched in low complexity. Gly residues predominate over residues 84-105 (NGGGGGGGGGAGGGGPGAGGGT). A helical transmembrane segment spans residues 476–496 (LPFFILFTAGLCSFTALLALL).

It belongs to the ST7 family.

It localises to the membrane. The polypeptide is Protein ST7 homolog (Drosophila pseudoobscura pseudoobscura (Fruit fly)).